A 90-amino-acid polypeptide reads, in one-letter code: Small ribosomal subunit protein bS20 (90 aa).

Belongs to the bacterial ribosomal protein bS20 family.

Its function is as follows. Binds directly to 16S ribosomal RNA. This Rickettsia akari (strain Hartford) protein is Small ribosomal subunit protein bS20.